Reading from the N-terminus, the 134-residue chain is uncharacterized protein (134 aa).

The protein resides in the mitochondrion. This is an uncharacterized protein from Saccharomyces cerevisiae (strain ATCC 204508 / S288c) (Baker's yeast).